A 258-amino-acid polypeptide reads, in one-letter code: UPF0246 protein NTHI1156 (258 aa).

It belongs to the UPF0246 family.

This Haemophilus influenzae (strain 86-028NP) protein is UPF0246 protein NTHI1156.